Reading from the N-terminus, the 404-residue chain is MNNSRMSSVSTQKTTGRSALGTKSALAAIIATTMMVSVASAASLQTTKATEAASTGWATQSGGTTGGAKASSSKIYAVKSISEFKAALNGTDSSPKIIQVTGAIDISGGKAYTSFDDQKARSQISIPSNTTIIGIGNKGKFTNGSLVVKGVSNVILRNLYIETPVDVAPHYEEGDGWNAEWDAVVIDSTDHVWVDHVTISDGSLTDDKYTTKNGEKYVQHDGSLDIKRGSDYVTVSNSRFELHDKTILIGHSDNNGSQDAGKLRVTFHNNLFDRVGERTPRVRFGSVHAYNNVYVGDVNHKAYRYQYSFGIGTSGSLLSESNAFTIDNMKKISGRDKECSVVKAFNGKIFSDKGSIINGASYNLNGCGFGFSAYSAKIPYKYSAQTITTSLANSISSNAGYGKL.

Positions 1–41 (MNNSRMSSVSTQKTTGRSALGTKSALAAIIATTMMVSVASA) are cleaved as a signal peptide. Ca(2+) is bound by residues Asp-182 and Asp-225. The active site involves Arg-278.

It belongs to the polysaccharide lyase 1 family. PLBC subfamily. Ca(2+) is required as a cofactor.

The protein resides in the secreted. It catalyses the reaction Eliminative cleavage of (1-&gt;4)-alpha-D-galacturonan to give oligosaccharides with 4-deoxy-alpha-D-galact-4-enuronosyl groups at their non-reducing ends.. Its pathway is glycan metabolism; pectin degradation; 2-dehydro-3-deoxy-D-gluconate from pectin: step 2/5. Its function is as follows. Involved in maceration and soft-rotting of plant tissue. Pectate lyases have been implicated as pathogenicity factors which induce maceration or rotting of plant tissue. PelE is sufficient to induce these effects under laboratory conditions. The chain is Pectate lyase E (pelE) from Dickeya dadantii (strain 3937) (Erwinia chrysanthemi (strain 3937)).